Reading from the N-terminus, the 673-residue chain is Gametogenetin (673 aa).

The tract at residues 1 to 599 (MGNVQSEPSA…TSTAGASNKG (599 aa)) is disordered. The span at 14–30 (SRKEQASDRASDSRRTP) shows a compositional bias: basic and acidic residues. The span at 70–83 (ASSSPLPLTLELPS) shows a compositional bias: low complexity. The tract at residues 125–506 (RGLLEASHRG…APTPPSTLSP (382 aa)) is interaction with GGNBP1. Residues 161–178 (PAPPPTPLEPRKQLPPAP) show a composition bias toward pro residues. The span at 192–202 (LASSATSPTES) shows a compositional bias: polar residues. Residues 257-268 (SASGPLAAKASP) show a composition bias toward low complexity. Residue Ser399 is modified to Phosphoserine. Low complexity predominate over residues 413 to 424 (PRRPTPALLAPP). Pro residues predominate over residues 438–475 (RPVPPSPQQIPPLPPPPPTPPATPPPAPPPTPQPPALP). The span at 504–531 (LSPTAAADQVPAATPATVTSQVPATATA) shows a compositional bias: low complexity. The tract at residues 511 to 673 (DQVPAATPAT…HYDLQATHST (163 aa)) is interactions with ZNF403/GGNBP2 and OAZ3. Residues 542–551 (TRTRRNKGPR) are compositionally biased toward basic residues.

Isoform 1 and isoform 3 interact with FANCL. Isoform 1 interacts with GGNBP1, ZNF403/GGNBP2 and OAZ3. Isoform 2 interacts with GGNBP1. Testis-specific. Specifically expressed in the germ cells and not in the somatic, Sertoli, or Leydig cells. In adult testis, expression starts in stage VIII pachytene spermatocytes, increases in stage IX and X pachytene spermatocytes, and culminates in stage XI diplotene spermatocytes and the meiotic cells in stage XII. Expression decreases slightly in step 1-3 spermatids, further decreases in step 4-11 spermatids, and is no longer detectable in step 12 spermatids and beyond. Isoform 2 is mainly expressed in testis.

It localises to the cytoplasm. The protein localises to the perinuclear region. The protein resides in the cytoplasmic vesicle. Its subcellular location is the nucleus. It is found in the nucleolus. May be involved in spermatogenesis. This Mus musculus (Mouse) protein is Gametogenetin (Ggn).